The following is a 347-amino-acid chain: NADH-quinone oxidoreductase subunit H (347 aa).

8 helical membrane-spanning segments follow: residues 13–33 (LIIA…VAYL), 82–102 (GVFL…WAVI), 115–135 (VGIL…IMGG), 161–181 (IGFV…TDIV), 198–218 (FLDW…ISAL), 248–268 (FLLF…LMTV), 286–306 (VPGI…FAMV), and 325–345 (VFLP…KVFG).

This sequence belongs to the complex I subunit 1 family. As to quaternary structure, NDH-1 is composed of 14 different subunits. Subunits NuoA, H, J, K, L, M, N constitute the membrane sector of the complex.

It is found in the cell inner membrane. It catalyses the reaction a quinone + NADH + 5 H(+)(in) = a quinol + NAD(+) + 4 H(+)(out). Functionally, NDH-1 shuttles electrons from NADH, via FMN and iron-sulfur (Fe-S) centers, to quinones in the respiratory chain. The immediate electron acceptor for the enzyme in this species is believed to be ubiquinone. Couples the redox reaction to proton translocation (for every two electrons transferred, four hydrogen ions are translocated across the cytoplasmic membrane), and thus conserves the redox energy in a proton gradient. This subunit may bind ubiquinone. The protein is NADH-quinone oxidoreductase subunit H of Brucella melitensis biotype 1 (strain ATCC 23456 / CCUG 17765 / NCTC 10094 / 16M).